We begin with the raw amino-acid sequence, 199 residues long: Gamma-glutamylcyclotransferase 2-3 (199 aa).

5 to 10 (VFGYGS) is a binding site for substrate. Glutamate 86 acts as the Proton acceptor in catalysis.

This sequence belongs to the gamma-glutamylcyclotransferase family. Mn(2+) is required as a cofactor.

Its subcellular location is the cytoplasm. The enzyme catalyses glutathione = L-cysteinylglycine + 5-oxo-L-proline. Functionally, converts GSH to 5-oxoproline and cysteine-glycine (Cys-Gly) dipeptide in vitro and plays a significant role in glutathione (GSH) homeostasis. Has no activity towards gamma-glutamyl-L-cysteine but possesses very low activity towards gamma-glutamyl-L-alanine. The protein is Gamma-glutamylcyclotransferase 2-3 of Arabidopsis thaliana (Mouse-ear cress).